The chain runs to 251 residues: Large ribosomal subunit protein uL3 (251 aa).

An N5-methylglutamine modification is found at Gln-151. A disordered region spans residues 221 to 251; it reads GLKQAANSNDSAAADTPAEVAAVEATEGQEG. A compositionally biased stretch (low complexity) spans 225-251; the sequence is AANSNDSAAADTPAEVAAVEATEGQEG.

This sequence belongs to the universal ribosomal protein uL3 family. In terms of assembly, part of the 50S ribosomal subunit. Forms a cluster with proteins L14 and L19. In terms of processing, methylated by PrmB.

One of the primary rRNA binding proteins, it binds directly near the 3'-end of the 23S rRNA, where it nucleates assembly of the 50S subunit. This Novosphingobium aromaticivorans (strain ATCC 700278 / DSM 12444 / CCUG 56034 / CIP 105152 / NBRC 16084 / F199) protein is Large ribosomal subunit protein uL3.